A 290-amino-acid chain; its full sequence is Diaminopimelate epimerase (290 aa).

Residues Asn17, Gln49, and Asn69 each contribute to the substrate site. The active-site Proton donor is the Cys78. Substrate is bound by residues 79–80 (GN), Asn165, Asn198, and 216–217 (ER). Cys225 functions as the Proton acceptor in the catalytic mechanism. 226-227 (GS) is a binding site for substrate.

It belongs to the diaminopimelate epimerase family. In terms of assembly, homodimer.

The protein localises to the cytoplasm. The enzyme catalyses (2S,6S)-2,6-diaminopimelate = meso-2,6-diaminopimelate. Its pathway is amino-acid biosynthesis; L-lysine biosynthesis via DAP pathway; DL-2,6-diaminopimelate from LL-2,6-diaminopimelate: step 1/1. Its function is as follows. Catalyzes the stereoinversion of LL-2,6-diaminopimelate (L,L-DAP) to meso-diaminopimelate (meso-DAP), a precursor of L-lysine and an essential component of the bacterial peptidoglycan. In Methylocella silvestris (strain DSM 15510 / CIP 108128 / LMG 27833 / NCIMB 13906 / BL2), this protein is Diaminopimelate epimerase.